Consider the following 293-residue polypeptide: Elongation factor Ts (293 aa).

Positions 80-83 are involved in Mg(2+) ion dislocation from EF-Tu; that stretch reads TDFV.

It belongs to the EF-Ts family.

It is found in the cytoplasm. In terms of biological role, associates with the EF-Tu.GDP complex and induces the exchange of GDP to GTP. It remains bound to the aminoacyl-tRNA.EF-Tu.GTP complex up to the GTP hydrolysis stage on the ribosome. The chain is Elongation factor Ts from Staphylococcus aureus (strain Newman).